The sequence spans 185 residues: ATP synthase subunit b 2 (185 aa).

Residues 1-23 (MAEGHGDAKGATAHTAADGGHKA) form a disordered region. The span at 9–18 (KGATAHTAAD) shows a compositional bias: low complexity. Residues 37 to 57 (LVSLTIAFVALYLIVSKIILP) form a helical membrane-spanning segment.

Belongs to the ATPase B chain family. F-type ATPases have 2 components, F(1) - the catalytic core - and F(0) - the membrane proton channel. F(1) has five subunits: alpha(3), beta(3), gamma(1), delta(1), epsilon(1). F(0) has three main subunits: a(1), b(2) and c(10-14). The alpha and beta chains form an alternating ring which encloses part of the gamma chain. F(1) is attached to F(0) by a central stalk formed by the gamma and epsilon chains, while a peripheral stalk is formed by the delta and b chains.

It localises to the cell inner membrane. In terms of biological role, f(1)F(0) ATP synthase produces ATP from ADP in the presence of a proton or sodium gradient. F-type ATPases consist of two structural domains, F(1) containing the extramembraneous catalytic core and F(0) containing the membrane proton channel, linked together by a central stalk and a peripheral stalk. During catalysis, ATP synthesis in the catalytic domain of F(1) is coupled via a rotary mechanism of the central stalk subunits to proton translocation. Component of the F(0) channel, it forms part of the peripheral stalk, linking F(1) to F(0). The b'-subunit is a diverged and duplicated form of b found in plants and photosynthetic bacteria. The sequence is that of ATP synthase subunit b 2 (atpF2) from Rhodopseudomonas palustris (strain BisB5).